Consider the following 429-residue polypeptide: Glucose-1-phosphate adenylyltransferase (429 aa).

Alpha-D-glucose 1-phosphate is bound by residues Gly162, 177 to 178, and Ser209; that span reads EK.

This sequence belongs to the bacterial/plant glucose-1-phosphate adenylyltransferase family. Homotetramer.

It catalyses the reaction alpha-D-glucose 1-phosphate + ATP + H(+) = ADP-alpha-D-glucose + diphosphate. The protein operates within glycan biosynthesis; glycogen biosynthesis. In terms of biological role, involved in the biosynthesis of ADP-glucose, a building block required for the elongation reactions to produce glycogen. Catalyzes the reaction between ATP and alpha-D-glucose 1-phosphate (G1P) to produce pyrophosphate and ADP-Glc. This chain is Glucose-1-phosphate adenylyltransferase, found in Rippkaea orientalis (strain PCC 8801 / RF-1) (Cyanothece sp. (strain PCC 8801)).